A 422-amino-acid chain; its full sequence is Lipoyl synthase, mitochondrial (422 aa).

Residues 1–34 constitute a mitochondrion transit peptide; sequence MAASSTRLRCLYASSAPAWKKSPSQSIISLSRHY. Over residues 37–48 the composition is skewed to polar residues; sequence TSSTTPSLNPDE. The disordered stretch occupies residues 37-70; sequence TSSTTPSLNPDESSSSSSSTIPKRRKTTTFRDKL. 7 residues coordinate [4Fe-4S] cluster: C146, C151, C157, C177, C181, C184, and S383. Residues 160–372 enclose the Radical SAM core domain; sequence GSDKSAATAT…RQRALEMGFL (213 aa).

Belongs to the radical SAM superfamily. Lipoyl synthase family. The cofactor is [4Fe-4S] cluster.

Its subcellular location is the mitochondrion. The catalysed reaction is [[Fe-S] cluster scaffold protein carrying a second [4Fe-4S](2+) cluster] + N(6)-octanoyl-L-lysyl-[protein] + 2 oxidized [2Fe-2S]-[ferredoxin] + 2 S-adenosyl-L-methionine + 4 H(+) = [[Fe-S] cluster scaffold protein] + N(6)-[(R)-dihydrolipoyl]-L-lysyl-[protein] + 4 Fe(3+) + 2 hydrogen sulfide + 2 5'-deoxyadenosine + 2 L-methionine + 2 reduced [2Fe-2S]-[ferredoxin]. It functions in the pathway protein modification; protein lipoylation via endogenous pathway; protein N(6)-(lipoyl)lysine from octanoyl-[acyl-carrier-protein]: step 2/2. Functionally, catalyzes the radical-mediated insertion of two sulfur atoms into the C-6 and C-8 positions of the octanoyl moiety bound to the lipoyl domains of lipoate-dependent enzymes, thereby converting the octanoylated domains into lipoylated derivatives. The polypeptide is Lipoyl synthase, mitochondrial (Talaromyces stipitatus (strain ATCC 10500 / CBS 375.48 / QM 6759 / NRRL 1006) (Penicillium stipitatum)).